Reading from the N-terminus, the 378-residue chain is Valine--tRNA ligase (378 aa).

The stretch at 307-377 (AGFINKEAEL…IQEQYKAIEA (71 aa)) forms a coiled coil.

It belongs to the class-I aminoacyl-tRNA synthetase family. ValS type 1 subfamily. As to quaternary structure, monomer.

The protein localises to the cytoplasm. The enzyme catalyses tRNA(Val) + L-valine + ATP = L-valyl-tRNA(Val) + AMP + diphosphate. Its function is as follows. Catalyzes the attachment of valine to tRNA(Val). As ValRS can inadvertently accommodate and process structurally similar amino acids such as threonine, to avoid such errors, it has a 'posttransfer' editing activity that hydrolyzes mischarged Thr-tRNA(Val) in a tRNA-dependent manner. The protein is Valine--tRNA ligase (valS) of Haemophilus parainfluenzae.